A 456-amino-acid polypeptide reads, in one-letter code: Chromosomal replication initiator protein DnaA (456 aa).

The segment at 1–83 is domain I, interacts with DnaA modulators; the sequence is MTASLWQQCL…LRFDIGNRPH (83 aa). The segment at 83 to 119 is domain II; it reads HPVAVARAPARGADPVNNSQKSWESKAEAKPEPNHKS. The disordered stretch occupies residues 92–122; the sequence is ARGADPVNNSQKSWESKAEAKPEPNHKSNTN. The span at 105–117 shows a compositional bias: basic and acidic residues; the sequence is WESKAEAKPEPNH. Residues 120–336 form a domain III, AAA+ region region; it reads NTNVNYTFEN…GALNRVIANA (217 aa). The ATP site is built by glycine 164, glycine 166, lysine 167, and threonine 168. The tract at residues 337-456 is domain IV, binds dsDNA; it reads NFTGRAINID…YSNLIRTLSS (120 aa).

This sequence belongs to the DnaA family. In terms of assembly, oligomerizes as a right-handed, spiral filament on DNA at oriC.

The protein localises to the cytoplasm. Its function is as follows. Plays an essential role in the initiation and regulation of chromosomal replication. ATP-DnaA binds to the origin of replication (oriC) to initiate formation of the DNA replication initiation complex once per cell cycle. Binds the DnaA box (a 9 base pair repeat at the origin) and separates the double-stranded (ds)DNA. Forms a right-handed helical filament on oriC DNA; dsDNA binds to the exterior of the filament while single-stranded (ss)DNA is stabiized in the filament's interior. The ATP-DnaA-oriC complex binds and stabilizes one strand of the AT-rich DNA unwinding element (DUE), permitting loading of DNA polymerase. After initiation quickly degrades to an ADP-DnaA complex that is not apt for DNA replication. Binds acidic phospholipids. The protein is Chromosomal replication initiator protein DnaA of Aeromonas hydrophila subsp. hydrophila (strain ATCC 7966 / DSM 30187 / BCRC 13018 / CCUG 14551 / JCM 1027 / KCTC 2358 / NCIMB 9240 / NCTC 8049).